Here is a 333-residue protein sequence, read N- to C-terminus: Flotillin-like protein FloA (333 aa).

Residues 9 to 29 form a helical membrane-spanning segment; sequence IVLIVGGIIFLILFFHYVPFF.

This sequence belongs to the flotillin-like FloA family. In terms of assembly, homooligomerizes.

It localises to the cell membrane. The protein localises to the membrane raft. Its function is as follows. Found in functional membrane microdomains (FMM) that may be equivalent to eukaryotic membrane rafts. FMMs are highly dynamic and increase in number as cells age. Flotillins are thought to be important factors in membrane fluidity. This is Flotillin-like protein FloA from Bacteroides thetaiotaomicron (strain ATCC 29148 / DSM 2079 / JCM 5827 / CCUG 10774 / NCTC 10582 / VPI-5482 / E50).